A 372-amino-acid polypeptide reads, in one-letter code: DNA-directed RNA polymerase subunit alpha (372 aa).

The segment at methionine 1 to aspartate 268 is alpha N-terminal domain (alpha-NTD). The tract at residues lysine 280–glutamate 372 is alpha C-terminal domain (alpha-CTD).

This sequence belongs to the RNA polymerase alpha chain family. Homodimer. The RNAP catalytic core consists of 2 alpha, 1 beta, 1 beta' and 1 omega subunit. When a sigma factor is associated with the core the holoenzyme is formed, which can initiate transcription.

The enzyme catalyses RNA(n) + a ribonucleoside 5'-triphosphate = RNA(n+1) + diphosphate. Its function is as follows. DNA-dependent RNA polymerase catalyzes the transcription of DNA into RNA using the four ribonucleoside triphosphates as substrates. This chain is DNA-directed RNA polymerase subunit alpha, found in Ehrlichia canis (strain Jake).